Reading from the N-terminus, the 460-residue chain is Nuclear transport factor 2 (460 aa).

Residues 15–131 (VGRAFVEQYY…YFVLNDVFRF (117 aa)) form the NTF2 domain. Disordered regions lie at residues 207–226 (EPPT…GDAP), 238–289 (KSSP…VDVE), and 361–460 (RQAV…GGSS). An RRM domain is found at 293–370 (HSIYVRNLPF…RQAVVEEKKT (78 aa)). The segment covering 373–382 (RGGGNNGGSR) has biased composition (gly residues). Residues 383–394 (GRYFSGRGSFRN) show a composition bias toward low complexity. Gly residues-rich tracts occupy residues 399 to 416 (GGRG…GGEF) and 450 to 460 (GRGGARGGGSS).

As to quaternary structure, interacts with MBD6.

The protein localises to the cytoplasm. It localises to the nucleus. Its function is as follows. Involved in RNA-directed DNA methylation (RdDM). This Arabidopsis thaliana (Mouse-ear cress) protein is Nuclear transport factor 2.